The primary structure comprises 229 residues: Adenylate kinase (229 aa).

10–15 (GSGKGT) lines the ATP pocket. The interval 30-59 (ESGVIFREHISKGTELGKQAKSYIDKGELV) is NMP. Residues S31, R36, 57–59 (ELV), 84–87 (GFPR), and Q91 each bind AMP. Positions 125-164 (GRRICKTNNNHPNNVSIDSIKPDGNNCRVCHGELIVRTDD) are LID. Residue R126 participates in ATP binding. Residues R161 and R173 each coordinate AMP. An ATP-binding site is contributed by N209.

Belongs to the adenylate kinase family. In terms of assembly, monomer.

It is found in the cytoplasm. It carries out the reaction AMP + ATP = 2 ADP. The protein operates within purine metabolism; AMP biosynthesis via salvage pathway; AMP from ADP: step 1/1. Functionally, catalyzes the reversible transfer of the terminal phosphate group between ATP and AMP. Plays an important role in cellular energy homeostasis and in adenine nucleotide metabolism. The polypeptide is Adenylate kinase (Lawsonia intracellularis (strain PHE/MN1-00)).